Here is a 212-residue protein sequence, read N- to C-terminus: Ribonuclease HII (212 aa).

Residues 1-206 form the RNase H type-2 domain; sequence MARFGVDEAG…SRDALGAAEQ (206 aa). A divalent metal cation-binding residues include aspartate 7, glutamate 8, and aspartate 100.

Belongs to the RNase HII family. It depends on Mn(2+) as a cofactor. Requires Mg(2+) as cofactor.

It is found in the cytoplasm. It catalyses the reaction Endonucleolytic cleavage to 5'-phosphomonoester.. In terms of biological role, endonuclease that specifically degrades the RNA of RNA-DNA hybrids. The chain is Ribonuclease HII from Halobacterium salinarum (strain ATCC 29341 / DSM 671 / R1).